Reading from the N-terminus, the 174-residue chain is Crossover junction endodeoxyribonuclease RuvC (174 aa).

Active-site residues include Asp8, Glu68, and Asp140. Mg(2+) is bound by residues Asp8, Glu68, and Asp140.

The protein belongs to the RuvC family. As to quaternary structure, homodimer which binds Holliday junction (HJ) DNA. The HJ becomes 2-fold symmetrical on binding to RuvC with unstacked arms; it has a different conformation from HJ DNA in complex with RuvA. In the full resolvosome a probable DNA-RuvA(4)-RuvB(12)-RuvC(2) complex forms which resolves the HJ. Mg(2+) serves as cofactor.

The protein resides in the cytoplasm. The catalysed reaction is Endonucleolytic cleavage at a junction such as a reciprocal single-stranded crossover between two homologous DNA duplexes (Holliday junction).. Functionally, the RuvA-RuvB-RuvC complex processes Holliday junction (HJ) DNA during genetic recombination and DNA repair. Endonuclease that resolves HJ intermediates. Cleaves cruciform DNA by making single-stranded nicks across the HJ at symmetrical positions within the homologous arms, yielding a 5'-phosphate and a 3'-hydroxyl group; requires a central core of homology in the junction. The consensus cleavage sequence is 5'-(A/T)TT(C/G)-3'. Cleavage occurs on the 3'-side of the TT dinucleotide at the point of strand exchange. HJ branch migration catalyzed by RuvA-RuvB allows RuvC to scan DNA until it finds its consensus sequence, where it cleaves and resolves the cruciform DNA. In Legionella pneumophila (strain Corby), this protein is Crossover junction endodeoxyribonuclease RuvC.